Here is a 192-residue protein sequence, read N- to C-terminus: UPF0312 protein ECA1782 (192 aa).

An N-terminal signal peptide occupies residues 1–23 (MLKKTLLSLTAVSMLASAGSALA).

The protein belongs to the UPF0312 family. Type 1 subfamily.

Its subcellular location is the periplasm. The chain is UPF0312 protein ECA1782 from Pectobacterium atrosepticum (strain SCRI 1043 / ATCC BAA-672) (Erwinia carotovora subsp. atroseptica).